A 136-amino-acid chain; its full sequence is Blasticidin-S acetyltransferase (136 aa).

An N-acetyltransferase domain is found at 1–136 (MLSLPRLQTV…ITSHLLVKEL (136 aa)).

In terms of biological role, confers resistance to blasticidin S antibiotic. This is Blasticidin-S acetyltransferase (bls) from Streptomyces morookaense (Streptoverticillium morookaense).